The following is a 105-amino-acid chain: Malonate decarboxylase acyl carrier protein (105 aa).

Ser28 bears the O-(phosphoribosyl dephospho-coenzyme A)serine mark.

It belongs to the MdcC family. In terms of processing, covalently binds the prosthetic group of malonate decarboxylase.

Its subcellular location is the cytoplasm. Its function is as follows. Subunit of malonate decarboxylase, it is an acyl carrier protein to which acetyl and malonyl thioester residues are bound via a 2'-(5''-phosphoribosyl)-3'-dephospho-CoA prosthetic group and turn over during the catalytic mechanism. This Xanthomonas axonopodis pv. citri (strain 306) protein is Malonate decarboxylase acyl carrier protein.